The sequence spans 1036 residues: MVIILLLVFFVGSSVSQPCHPNDLSALRELAGALKNKSVTESWLNGSRCCEWDGVFCEGSDVSGRVTKLVLPEKGLEGVISKSLGELTELRVLDLSRNQLKGEVPAEISKLEQLQVLDLSHNLLSGSVLGVVSGLKLIQSLNISSNSLSGKLSDVGVFPGLVMLNVSNNLFEGEIHPELCSSSGGIQVLDLSMNRLVGNLDGLYNCSKSIQQLHIDSNRLTGQLPDYLYSIRELEQLSLSGNYLSGELSKNLSNLSGLKSLLISENRFSDVIPDVFGNLTQLEHLDVSSNKFSGRFPPSLSQCSKLRVLDLRNNSLSGSINLNFTGFTDLCVLDLASNHFSGPLPDSLGHCPKMKILSLAKNEFRGKIPDTFKNLQSLLFLSLSNNSFVDFSETMNVLQHCRNLSTLILSKNFIGEEIPNNVTGFDNLAILALGNCGLRGQIPSWLLNCKKLEVLDLSWNHFYGTIPHWIGKMESLFYIDFSNNTLTGAIPVAITELKNLIRLNGTASQMTDSSGIPLYVKRNKSSNGLPYNQVSRFPPSIYLNNNRLNGTILPEIGRLKELHMLDLSRNNFTGTIPDSISGLDNLEVLDLSYNHLYGSIPLSFQSLTFLSRFSVAYNRLTGAIPSGGQFYSFPHSSFEGNLGLCRAIDSPCDVLMSNMLNPKGSSRRNNNGGKFGRSSIVVLTISLAIGITLLLSVILLRISRKDVDDRINDVDEETISGVSKALGPSKIVLFHSCGCKDLSVEELLKSTNNFSQANIIGCGGFGLVYKANFPDGSKAAVKRLSGDCGQMEREFQAEVEALSRAEHKNLVSLQGYCKHGNDRLLIYSFMENGSLDYWLHERVDGNMTLIWDVRLKIAQGAARGLAYLHKVCEPNVIHRDVKSSNILLDEKFEAHLADFGLARLLRPYDTHVTTDLVGTLGYIPPEYSQSLIATCRGDVYSFGVVLLELVTGRRPVEVCKGKSCRDLVSRVFQMKAEKREAELIDTTIRENVNERTVLEMLEIACKCIDHEPRRRPLIEEVVTWLEDLPMESVQQQ.

The N-terminal stretch at 1–16 is a signal peptide; that stretch reads MVIILLLVFFVGSSVS. Residues N36 and N45 are each glycosylated (N-linked (GlcNAc...) asparagine). 17 LRR repeats span residues 89-111, 113-136, 137-159, 160-182, 185-207, 209-231, 233-256, 257-279, 281-303, 305-326, 329-351, 353-375, 377-398, 403-423, 427-450, 451-473, and 475-498; these read ELRVLDLSRNQLKGEVPAEISKL, QLQVLDLSHNLLSGSVLGVVSGLK, LIQSLNISSNSLSGKLSDVGVFP, GLVMLNVSNNLFEGEIHPELCSS, GIQVLDLSMNRLVGNLDGLYNCS, SIQQLHIDSNRLTGQLPDYLYSI, ELEQLSLSGNYLSGELSKNLSNLS, GLKSLLISENRFSDVIPDVFGNL, QLEHLDVSSNKFSGRFPPSLSQC, KLRVLDLRNNSLSGSINLNFTG, DLCVLDLASNHFSGPLPDSLGHC, KMKILSLAKNEFRGKIPDTFKNL, SLLFLSLSNNSFVDFSETMNVL, NLSTLILSKNFIGEEIPNNVT, NLAILALGNCGLRGQIPSWLLNCK, KLEVLDLSWNHFYGTIPHWIGKM, and SLFYIDFSNNTLTGAIPVAITELK. N142, N165, and N205 each carry an N-linked (GlcNAc...) asparagine glycan. N251, N254, and N278 each carry an N-linked (GlcNAc...) asparagine glycan. N-linked (GlcNAc...) asparagine glycosylation is found at N313 and N323. N-linked (GlcNAc...) asparagine glycans are attached at residues N385, N403, and N421. 5 N-linked (GlcNAc...) asparagine glycosylation sites follow: N483, N504, N523, N549, and N571. 2 LRR repeats span residues 561–583 and 585–606; these read ELHMLDLSRNNFTGTIPDSISGL and NLEVLDLSYNHLYGSIPLSFQS. The chain crosses the membrane as a helical span at residues 680–700; the sequence is IVVLTISLAIGITLLLSVILL. T751 is modified (phosphothreonine). Residues 754 to 1025 form the Protein kinase domain; the sequence is FSQANIIGCG…PLIEEVVTWL (272 aa). Residues 760–768 and K782 each bind ATP; that span reads IGCGGFGLV. Y827 and Y867 each carry phosphotyrosine. The active-site Proton acceptor is D880. At Y922 the chain carries Phosphotyrosine. The stretch at 995–1020 is one LRR 20 repeat; the sequence is RTVLEMLEIACKCIDHEPRRRPLIEE.

The protein belongs to the protein kinase superfamily. Ser/Thr protein kinase family.

It is found in the cell membrane. It carries out the reaction L-seryl-[protein] + ATP = O-phospho-L-seryl-[protein] + ADP + H(+). The catalysed reaction is L-threonyl-[protein] + ATP = O-phospho-L-threonyl-[protein] + ADP + H(+). Functionally, phytosulfokine receptor with a serine/threonine-protein kinase activity. This is Phytosulfokine receptor 2 (PSKR2) from Arabidopsis thaliana (Mouse-ear cress).